Consider the following 269-residue polypeptide: Protein OPG079 (269 aa).

Belongs to the orthopoxvirus OPG079 family. As to quaternary structure, homoomultimer (Potential). Interacts with the small subunit of ribonucleotide reductase. Interacts with host FAM111A; this interaction protomtes OPG079 degradation through autophagy.

The protein resides in the host cytoplasm. Plays an essential role in viral DNA replication. Binds to ssDNA with high affinity and localizes to cytoplasmic factories where nascent viral genomes accumulate. May disrupt loops, hairpins and other secondary structures present on ssDNA to reduce and eliminate pausing of viral DNA polymerase at specific sites during elongation. The sequence is that of Protein OPG079 (OPG079) from Vaccinia virus (strain Copenhagen) (VACV).